The following is a 461-amino-acid chain: D-phenylhydantoinase (461 aa).

His-59, His-61, and Lys-151 together coordinate a divalent metal cation. N6-carboxylysine is present on Lys-151. Tyr-156 lines the substrate pocket. 2 residues coordinate a divalent metal cation: His-182 and His-239. Substrate is bound at residue Ser-286. A divalent metal cation is bound at residue Asp-313. Asn-335 lines the substrate pocket.

The protein belongs to the metallo-dependent hydrolases superfamily. Hydantoinase/dihydropyrimidinase family. Homotetramer. A divalent metal cation serves as cofactor. Carboxylation allows a single lysine to coordinate two divalent metal cations.

The enzyme catalyses D-5-phenylhydantoin + H2O = N-carbamoyl-D-phenylglycine + H(+). Its function is as follows. Catalyzes the stereospecific hydrolysis of the cyclic amide bond of D-hydantoin derivatives with an aromatic side chains at the 5'-position. Has no activity on dihydropyrimidines. The physiological function is unknown. The polypeptide is D-phenylhydantoinase (Escherichia coli (strain 55989 / EAEC)).